We begin with the raw amino-acid sequence, 236 residues long: tRNA1(Val) (adenine(37)-N6)-methyltransferase (236 aa).

The protein belongs to the methyltransferase superfamily. tRNA (adenine-N(6)-)-methyltransferase family.

It is found in the cytoplasm. The catalysed reaction is adenosine(37) in tRNA1(Val) + S-adenosyl-L-methionine = N(6)-methyladenosine(37) in tRNA1(Val) + S-adenosyl-L-homocysteine + H(+). In terms of biological role, specifically methylates the adenine in position 37 of tRNA(1)(Val) (anticodon cmo5UAC). This is tRNA1(Val) (adenine(37)-N6)-methyltransferase from Shewanella sp. (strain MR-7).